A 396-amino-acid polypeptide reads, in one-letter code: Ornithine aminotransferase 2 (396 aa).

The residue at position 255 (K255) is an N6-(pyridoxal phosphate)lysine.

The protein belongs to the class-III pyridoxal-phosphate-dependent aminotransferase family. OAT subfamily. It depends on pyridoxal 5'-phosphate as a cofactor.

It localises to the cytoplasm. It catalyses the reaction a 2-oxocarboxylate + L-ornithine = L-glutamate 5-semialdehyde + an L-alpha-amino acid. It participates in amino-acid biosynthesis; L-proline biosynthesis; L-glutamate 5-semialdehyde from L-ornithine: step 1/1. Functionally, catalyzes the interconversion of ornithine to glutamate semialdehyde. The sequence is that of Ornithine aminotransferase 2 from Staphylococcus aureus (strain COL).